We begin with the raw amino-acid sequence, 146 residues long: Hemoglobin subunit beta-A/B (146 aa).

Gly-1 carries the N-acetylserine; in variant beta-B modification. The region spanning 2 to 146 (FLTAEEKGLV…VANALAHKYH (145 aa)) is the Globin domain. Ser-44 carries the post-translational modification Phosphoserine. At Lys-59 the chain carries N6-acetyllysine. Position 63 (His-63) interacts with heme b. Residue Lys-82 is modified to N6-acetyllysine. Heme b is bound at residue His-92. Position 93 is an S-nitrosocysteine (Cys-93). Lys-144 carries the N6-acetyllysine modification.

Belongs to the globin family. In terms of assembly, heterotetramer of two alpha chains and two beta chains. Red blood cells.

Its function is as follows. Involved in oxygen transport from the lung to the various peripheral tissues. The sequence is that of Hemoglobin subunit beta-A/B (HBB) from Felis catus (Cat).